We begin with the raw amino-acid sequence, 376 residues long: Erythronate-4-phosphate dehydrogenase (376 aa).

Substrate contacts are provided by S45 and T67. D147 lines the NAD(+) pocket. Residue R209 is part of the active site. D233 provides a ligand contact to NAD(+). Residue E238 is part of the active site. Catalysis depends on H255, which acts as the Proton donor. G258 is a binding site for NAD(+). Position 259 (Y259) interacts with substrate.

It belongs to the D-isomer specific 2-hydroxyacid dehydrogenase family. PdxB subfamily. Homodimer.

The protein localises to the cytoplasm. It catalyses the reaction 4-phospho-D-erythronate + NAD(+) = (R)-3-hydroxy-2-oxo-4-phosphooxybutanoate + NADH + H(+). Its pathway is cofactor biosynthesis; pyridoxine 5'-phosphate biosynthesis; pyridoxine 5'-phosphate from D-erythrose 4-phosphate: step 2/5. Functionally, catalyzes the oxidation of erythronate-4-phosphate to 3-hydroxy-2-oxo-4-phosphonooxybutanoate. This chain is Erythronate-4-phosphate dehydrogenase, found in Shewanella baltica (strain OS195).